A 981-amino-acid chain; its full sequence is Anoctamin-3 (981 aa).

Residues 1–28 show a composition bias toward polar residues; the sequence is MVHHSGSIQSFKQQKGMNISKSEITTEA. Disordered stretches follow at residues 1–32 and 67–87; these read MVHHSGSIQSFKQQKGMNISKSEITTEASLKP and PTSVTFLSADKPEHVTSEESR. Topologically, residues 1-403 are cytoplasmic; that stretch reads MVHHSGSIQS…LYFAWLGWYT (403 aa). Positions 76-87 are enriched in basic and acidic residues; sequence DKPEHVTSEESR. Residues 404–424 traverse the membrane as a helical segment; the sequence is GMLIPAAVVGLCVFFYGLVTM. Residues N425, N448, and N455 are each glycosylated (N-linked (GlcNAc...) asparagine). Residues 425 to 469 are Extracellular-facing; it reads NESQVSQEICKATEVFMCPLCDKNCSLQRLNDSCIYAKVTYLFDN. Residues 470-490 form a helical membrane-spanning segment; the sequence is GGTVFFAIFMAIWATVFLEFW. At 491-550 the chain is on the cytoplasmic side; sequence KRRRSILTYTWDLIEWEEEEETLRPQFEAKYYRMEVINPITGKPEPHQPSSDKVTRLLVS. The chain crosses the membrane as a helical span at residues 551 to 571; sequence VSGIFFMISLVITAVFAVVVY. The Extracellular portion of the chain corresponds to 572–592; the sequence is RLVVMEQFASFKWNFVKQHWQ. A helical transmembrane segment spans residues 593 to 613; that stretch reads FATSGAAVCINFIIIMLLNLA. The Cytoplasmic portion of the chain corresponds to 614–640; that stretch reads YEKIAYLLTNLEYPRTESEWENSFALK. The chain crosses the membrane as a helical span at residues 641-661; the sequence is MFLFQFVNLNSSIFYIAFFLG. Topologically, residues 662-761 are extracellular; that stretch reads RFVGHPGKYN…MDEYLEMVLQ (100 aa). The chain crosses the membrane as a helical span at residues 762–782; that stretch reads FGFTTIFVAAFPLAPLLALLN. At 783-810 the chain is on the cytoplasmic side; the sequence is NIIEIRLDAYKFVTQWRRPLPARATDIG. Residues 811-831 traverse the membrane as a helical segment; the sequence is IWLGILEGIGILAVITNAFVI. At 832 to 914 the chain is on the extracellular side; the sequence is AITSDYIPRF…QYWHILAARL (83 aa). The N-linked (GlcNAc...) asparagine glycan is linked to N866. The chain crosses the membrane as a helical span at residues 915-935; it reads AFIIVFEHLVFGIKSFIAYLI. Topologically, residues 936 to 981 are cytoplasmic; sequence PDIPKGLRERIRREKYLVQEMMYEAELEHLQQQRRKSGQPIHHEWP.

The protein belongs to the anoctamin family. As to quaternary structure, interacts with KCNT1/Slack. Predominantly expressed in neuronal tissues. Expressed in brain.

It is found in the cell membrane. It carries out the reaction a 1,2-diacyl-sn-glycero-3-phosphocholine(in) = a 1,2-diacyl-sn-glycero-3-phosphocholine(out). The enzyme catalyses a beta-D-galactosyl-(1&lt;-&gt;1')-N-acylsphing-4-enine(out) = a beta-D-galactosyl-(1&lt;-&gt;1')-N-acylsphing-4-enine(in). Functionally, has calcium-dependent phospholipid scramblase activity; scrambles phosphatidylcholine and galactosylceramide. Does not exhibit calcium-activated chloride channel (CaCC) activity. Seems to act as potassium channel regulator and may inhibit pain signaling; can facilitate KCNT1/Slack channel activity by promoting its full single-channel conductance at very low sodium concentrations and by increasing its sodium sensitivity. The sequence is that of Anoctamin-3 from Mus musculus (Mouse).